The chain runs to 309 residues: Elongator complex protein 5 (309 aa).

2 positions are modified to phosphoserine: Ser3 and Ser4.

The protein belongs to the ELP5 family. As to quaternary structure, component of the elongator complex, which consists of ELP1/IKI3, ELP2, ELP3, ELP4, ELP5/IKI1 and ELP6. The elongator complex is composed of two copies of the Elp123 subcomplex (composed of ELP1/IKI3, ELP2 and ELP3) and two copies of the Elp456 subcomplex (composed of ELP4, ELP5/IKI1 and ELP6). The Elp123 subcomplex forms a two-lobed scaffold, which binds the Elp456 subcomplex asymmetrically. In each lobe, ELP2 is tightly sandwiched between ELP1/IKI3 and ELP3. The Elp123 subcomplex binds tRNA through ELP1/IKI3 and ELP3 and can bind 2 tRNAs simultaneously. tRNA-binding by the Elp123 subcomplex induces conformational rearrangements which precisely position the targeted anticodon base in the active site. The Elp456 subcomplex binds tRNA and has ATPase activity. Interacts with KTI11/DPH3.

It localises to the cytoplasm. The protein localises to the nucleus. Its pathway is tRNA modification; 5-methoxycarbonylmethyl-2-thiouridine-tRNA biosynthesis. In terms of biological role, component of the elongator complex which is required for multiple tRNA modifications, including mcm5U (5-methoxycarbonylmethyl uridine), mcm5s2U (5-methoxycarbonylmethyl-2-thiouridine), and ncm5U (5-carbamoylmethyl uridine). The elongator complex catalyzes formation of carboxymethyluridine in the wobble base at position 34 in tRNAs. It functions as a gamma-toxin target (TOT); disruption of the complex confers resistance to Kluyveromyces lactis toxin zymocin (pGKL1 killer toxin). May also be involved in sensitivity to Pichia inositovora toxin. This chain is Elongator complex protein 5 (IKI1), found in Saccharomyces cerevisiae (strain ATCC 204508 / S288c) (Baker's yeast).